Here is a 293-residue protein sequence, read N- to C-terminus: Meteorin (293 aa).

The first 23 residues, 1 to 23, serve as a signal peptide directing secretion; it reads MGFPAAALLCALCCGLLAPAARA. Intrachain disulfides connect Cys-30–Cys-51, Cys-82–Cys-118, Cys-171–Cys-242, Cys-174–Cys-266, and Cys-184–Cys-288.

The protein belongs to the meteorin family. In terms of assembly, monomer.

It is found in the secreted. In terms of biological role, involved in both glial cell differentiation and axonal network formation during neurogenesis. Promotes astrocyte differentiation and transforms cerebellar astrocytes into radial glia. Also induces axonal extension in small and intermediate neurons of sensory ganglia by activating nearby satellite glia. The protein is Meteorin (METRN) of Homo sapiens (Human).